Consider the following 87-residue polypeptide: U3-theraphotoxin-Hhn1g (87 aa).

The signal sequence occupies residues 1-24 (MVNMKASMFLTFAGLVLLFVVCFA). A propeptide spanning residues 25–52 (SESEEKEFPKEMLSSIFAVDNDFKQEER) is cleaved from the precursor. 3 disulfide bridges follow: Cys-54–Cys-67, Cys-61–Cys-72, and Cys-66–Cys-79.

The protein belongs to the neurotoxin 10 (Hwtx-1) family. 51 (Hntx-8) subfamily. Hntx-8 sub-subfamily. In terms of tissue distribution, expressed by the venom gland.

Its subcellular location is the secreted. Its function is as follows. Ion channel inhibitor. The chain is U3-theraphotoxin-Hhn1g from Cyriopagopus hainanus (Chinese bird spider).